The primary structure comprises 357 residues: Serine/threonine-protein kinase nekl-2 (357 aa).

The Protein kinase domain occupies 4–267 (YEKVRVVGRG…VSQLLSDPLV (264 aa)). ATP-binding positions include 10–18 (VGRGAFGVC) and Lys35. The active-site Proton acceptor is Asp137. The span at 281-290 (IEPPPTDKRK) shows a compositional bias: basic and acidic residues. The tract at residues 281–357 (IEPPPTDKRK…QSRSQVHSKY (77 aa)) is disordered. Composition is skewed to polar residues over residues 293–327 (ASLS…QLTP) and 336–357 (FFSS…HSKY).

It belongs to the protein kinase superfamily. NEK Ser/Thr protein kinase family. NIMA subfamily. Mg(2+) serves as cofactor. Expressed in hypodermal cells including in hyp7 syncytium but not in seam cells.

It localises to the cytoplasm. The catalysed reaction is L-seryl-[protein] + ATP = O-phospho-L-seryl-[protein] + ADP + H(+). The enzyme catalyses L-threonyl-[protein] + ATP = O-phospho-L-threonyl-[protein] + ADP + H(+). Functionally, probable serine/threonine-protein kinase required for the completion of molting. May play a role in endocytosis in the hypodermis syncytium. The sequence is that of Serine/threonine-protein kinase nekl-2 from Caenorhabditis elegans.